Reading from the N-terminus, the 422-residue chain is Glutamate-1-semialdehyde 2,1-aminomutase (422 aa).

The residue at position 258 (K258) is an N6-(pyridoxal phosphate)lysine.

It belongs to the class-III pyridoxal-phosphate-dependent aminotransferase family. HemL subfamily. In terms of assembly, homodimer. The cofactor is pyridoxal 5'-phosphate.

It is found in the cytoplasm. The enzyme catalyses (S)-4-amino-5-oxopentanoate = 5-aminolevulinate. It participates in porphyrin-containing compound metabolism; protoporphyrin-IX biosynthesis; 5-aminolevulinate from L-glutamyl-tRNA(Glu): step 2/2. The polypeptide is Glutamate-1-semialdehyde 2,1-aminomutase (Chlamydia trachomatis serovar D (strain ATCC VR-885 / DSM 19411 / UW-3/Cx)).